Reading from the N-terminus, the 324-residue chain is T-cell acute lymphocytic leukemia protein 1 homolog (324 aa).

Positions 1-49 (MMEKLKSEQFPLSPSAEGCASPPRGDGDARGKQEGTTAETGEHRLPEEL) are disordered. One can recognise a bHLH domain in the interval 185–237 (VRRIFTNSRERWRQQNVNGAFAELRKLIPTHPPDKKLSKNEILRLAMKYINFL). The segment at 276 to 324 (SPNSSCGSLLDGDASPESFTEDQDSSVESRPSARGLHHSSLPLDGNAQR) is disordered.

As to expression, expressed in hemopoietic and endothelial lineages. Isoform beta emerges first, expressing in the entire anterior and posterior lateral mesoderm (ALM and PLM respectively), and in the ventral wall of the dorsal aorta, where definitive hemopoiesis begins. Isoform alpha expresses later as two pairs of stripes in the PLM and ALM, and becomes restricted to the intermediate cell mass (ICM) by the 18-somite stage. The ICM is the key site of primitive hemopoiesis, giving rise to the erythroid lineage. Also expressed in all stages of endocardial cell migration and in the developing midbrain, hindbrain and spinal cord. In adults, expressed in the main hemopoietic organs, namely the kidney (where isoform alpha is the predominant isoform) and the spleen. Also expressed in the liver, gill and gonads.

It is found in the nucleus. Transcription factor that plays a pivotal role in hemopoietic and endothelial development, acting synergistically with lmo2 and downstream of clo. Specifies mesodermal precursors to a hemangioblast cell fate. Hemangioblasts are bipotential precursors of blood and endothelium, and in the absence of hemopoietic induction cues such as gata1, tal1/scl-lmo2-induced hemangioblasts differentiate into endothelial cells. Isoform alpha and isoform beta are redundant for the initiation of primitive hemopoiesis but have distinct roles in the regulation of primitive erythroid differentiation and definitive hemopoietic stem cell specification, most likely due to differences in expression levels. Specification of definitive hemopoietic stem cells requires isoform beta. DNA binding is required for erythroid maturation, but not for its other hemopoietic functions. Endothelial roles include development of the dorsal aorta, the site of definitive hemopoiesis in the embryo. Required for angiogenesis but not angioblast specification. Has an additional role in endocardium formation during heart development. May play a role in central nervous system development. The sequence is that of T-cell acute lymphocytic leukemia protein 1 homolog from Danio rerio (Zebrafish).